Reading from the N-terminus, the 111-residue chain is Cytochrome c (111 aa).

N-acetylalanine is present on A1. Residues C22, C25, and H26 each coordinate heme c. K80 carries the post-translational modification N6,N6,N6-trimethyllysine. M88 is a heme c binding site. N6,N6,N6-trimethyllysine is present on K94.

The protein belongs to the cytochrome c family. Binds 1 heme c group covalently per subunit.

It is found in the mitochondrion intermembrane space. Functionally, electron carrier protein. The oxidized form of the cytochrome c heme group can accept an electron from the heme group of the cytochrome c1 subunit of cytochrome reductase. Cytochrome c then transfers this electron to the cytochrome oxidase complex, the final protein carrier in the mitochondrial electron-transport chain. The polypeptide is Cytochrome c (Nigella damascena (Love-in-a-mist)).